Reading from the N-terminus, the 405-residue chain is S-adenosylmethionine synthase (405 aa).

An ATP-binding site is contributed by 141–146 (GQGSVD).

This sequence belongs to the AdoMet synthase 2 family. It depends on Mg(2+) as a cofactor.

It catalyses the reaction L-methionine + ATP + H2O = S-adenosyl-L-methionine + phosphate + diphosphate. It functions in the pathway amino-acid biosynthesis; S-adenosyl-L-methionine biosynthesis; S-adenosyl-L-methionine from L-methionine: step 1/1. Functionally, catalyzes the formation of S-adenosylmethionine from methionine and ATP. The sequence is that of S-adenosylmethionine synthase from Methanococcus maripaludis (strain C6 / ATCC BAA-1332).